The following is a 274-amino-acid chain: Probable glycerophosphodiester phosphodiesterase 1 (274 aa).

The 253-residue stretch at 12–264 (PFVVAHRGAS…HHPGRTKAWL (253 aa)) folds into the GP-PDE domain. Residue histidine 17 is the Proton acceptor of the active site. Ca(2+)-binding residues include glutamate 44 and aspartate 46. The Proton donor role is filled by histidine 59. Residue glutamate 126 coordinates Ca(2+).

Belongs to the glycerophosphoryl diester phosphodiesterase family. Ca(2+) serves as cofactor.

The enzyme catalyses a sn-glycero-3-phosphodiester + H2O = an alcohol + sn-glycerol 3-phosphate + H(+). Glycerophosphodiester phosphodiesterase hydrolyzes glycerophosphodiesters into glycerol-3-phosphate (G3P) and the corresponding alcohol. This is Probable glycerophosphodiester phosphodiesterase 1 (glpQ1) from Mycobacterium tuberculosis (strain CDC 1551 / Oshkosh).